A 371-amino-acid chain; its full sequence is Peptide chain release factor 2 (371 aa).

The residue at position 251 (glutamine 251) is an N5-methylglutamine.

It belongs to the prokaryotic/mitochondrial release factor family. Post-translationally, methylated by PrmC. Methylation increases the termination efficiency of RF2.

The protein localises to the cytoplasm. Functionally, peptide chain release factor 2 directs the termination of translation in response to the peptide chain termination codons UGA and UAA. In Arthrobacter sp. (strain FB24), this protein is Peptide chain release factor 2.